A 193-amino-acid polypeptide reads, in one-letter code: CASP-like protein 2D1 (193 aa).

The interval 1–24 (MRANNNNTREEERSSSSKQQQPQA) is disordered. The Cytoplasmic segment spans residues 1–29 (MRANNNNTREEERSSSSKQQQPQAHMSLK). The chain crosses the membrane as a helical span at residues 30–50 (IIDSCLRLSVVPLSVATIWLT). The Extracellular portion of the chain corresponds to 51-73 (VTNHESNPDYGNLDYNSIMGLKY). The helical transmembrane segment at 74–94 (MVGVSAISAIYALLSTISLWV) threads the bilayer. The Cytoplasmic portion of the chain corresponds to 95 to 109 (TCLVSKAWLFFVPDQ). The chain crosses the membrane as a helical span at residues 110–132 (VLAYVMTTSVAGATEIVYLLNKG). Residues 133–151 (DKIVTWSEMCSSYPHYCSK) are Extracellular-facing. A helical membrane pass occupies residues 152 to 172 (LTIALGLHVFVLFFFLFLSVI). Topologically, residues 173–193 (SAYRAFSPFDPPCDSQTNIDA) are cytoplasmic.

The protein belongs to the Casparian strip membrane proteins (CASP) family. As to quaternary structure, homodimer and heterodimers.

The protein resides in the cell membrane. The sequence is that of CASP-like protein 2D1 from Arabidopsis lyrata subsp. lyrata (Lyre-leaved rock-cress).